The following is a 557-amino-acid chain: UvrABC system protein C (557 aa).

Residues 14–89 form the GIY-YIG domain; that stretch reads EEPGVYIFKN…IKKYRPKYNV (76 aa). The 36-residue stretch at 194–229 folds into the UVR domain; sequence EEVFDYLKEKMETHSKMLDFENAAKYRDLLLNLSNV.

The protein belongs to the UvrC family. Interacts with UvrB in an incision complex.

Its subcellular location is the cytoplasm. Functionally, the UvrABC repair system catalyzes the recognition and processing of DNA lesions. UvrC both incises the 5' and 3' sides of the lesion. The N-terminal half is responsible for the 3' incision and the C-terminal half is responsible for the 5' incision. The sequence is that of UvrABC system protein C from Thermotoga sp. (strain RQ2).